The following is a 200-amino-acid chain: Imidazole glycerol phosphate synthase subunit HisH (200 aa).

In terms of domain architecture, Glutamine amidotransferase type-1 spans 3–200; the sequence is EVALIDAGGA…LRNFLEMDAA (198 aa). Residue Cys-78 is the Nucleophile of the active site. Catalysis depends on residues His-179 and Glu-181.

As to quaternary structure, heterodimer of HisH and HisF.

The protein localises to the cytoplasm. The catalysed reaction is 5-[(5-phospho-1-deoxy-D-ribulos-1-ylimino)methylamino]-1-(5-phospho-beta-D-ribosyl)imidazole-4-carboxamide + L-glutamine = D-erythro-1-(imidazol-4-yl)glycerol 3-phosphate + 5-amino-1-(5-phospho-beta-D-ribosyl)imidazole-4-carboxamide + L-glutamate + H(+). It carries out the reaction L-glutamine + H2O = L-glutamate + NH4(+). The protein operates within amino-acid biosynthesis; L-histidine biosynthesis; L-histidine from 5-phospho-alpha-D-ribose 1-diphosphate: step 5/9. IGPS catalyzes the conversion of PRFAR and glutamine to IGP, AICAR and glutamate. The HisH subunit catalyzes the hydrolysis of glutamine to glutamate and ammonia as part of the synthesis of IGP and AICAR. The resulting ammonia molecule is channeled to the active site of HisF. The polypeptide is Imidazole glycerol phosphate synthase subunit HisH (Xylella fastidiosa (strain Temecula1 / ATCC 700964)).